Here is a 207-residue protein sequence, read N- to C-terminus: Hemin/hemoglobin-binding protein 1 (207 aa).

An N-terminal signal peptide occupies residues Met-1–Ala-27. The NEAT domain occupies Leu-29–Leu-148. The interval Ala-151–Ser-178 is disordered. A compositionally biased stretch (polar residues) spans Ser-154 to Ser-178. Positions Asn-174–Ser-178 match the NPKXZ sorting signal motif. A Murein peptidoglycan amidated serine modification is found at Ser-177. Positions Ser-178–Lys-207 are cleaved as a propeptide — removed by sortase B.

It is found in the secreted. It localises to the cell wall. Its function is as follows. Binds both host hemin and hemoglobin with affinity in the nanomolar range and presumably directs it to membrane transporters. The protein is Hemin/hemoglobin-binding protein 1 of Listeria monocytogenes serovar 1/2a (strain ATCC BAA-679 / EGD-e).